The chain runs to 99 residues: Large ribosomal subunit protein uL23 (99 aa).

The protein belongs to the universal ribosomal protein uL23 family. Part of the 50S ribosomal subunit. Contacts protein L29, and trigger factor when it is bound to the ribosome.

In terms of biological role, one of the early assembly proteins it binds 23S rRNA. One of the proteins that surrounds the polypeptide exit tunnel on the outside of the ribosome. Forms the main docking site for trigger factor binding to the ribosome. This Shewanella sediminis (strain HAW-EB3) protein is Large ribosomal subunit protein uL23.